The chain runs to 807 residues: MSLGQNISRAILQWPVSGLVNHKSLPENPITELKLDPARPIVYALKTSSITDLMTLQQCCEDLGLPGPFTPLELNGQLLPRYVCLDRPPPLFGKRSKPLPFLQEFHQLLDLHKQDPALDIQVVPVTLFWGRAPGREGEEASGWNIISSLAPNRLKKALIVILKGRENLVRFSPPLSLRHMADKHGTDEAIAHKLARVARTHFSRQQLAATGPKLPNRNLLFKQLLDSNVIQQAIEEEAQREGISLEKAQKRAHGYMDEIASDFSYRLIRLGESFLGWLWNKLYRGLSVNGAEKVRQLAQEGHEIVYVPCHRSHMDYLLLSYVIYHQGMVPPHIAAGINLNFWPAGPIFRHGGAFFIRRTFKGNPLYSTVFREYLNLLFAKGYSVEFFTEGGRSRTGRLLPPKTGMLAMTLQAMMRGLDRPVTLVPVYLGYEHVMEVNTYHNELKGSRKEKESFLQVLGILRKLRNYGRGFVNFGEPLTLNNYLNEHVPSWKEHIGEEERPEWMAPTVNQLAELLMTRINGAAAVNGLTLSALALLAAERHALTRDELQAQLNTYLDLLKQVPYSPHSTIPDEDAKTLLDQAMELNKFEVSEDKLGQIVSLDRYQAILLTYYRNNILHLFAMPSLVAALIERCEGISRSEIVARCIDIYPLLKTELFLRYEEDELPELVDALLAELQRQQLIEARDGGFWVNPVNQTRLLLLAESIQETLQRYAIVLTRVLAQPRIEAEQLEADGLMMAERLGTLHGINAPEFFDQKLFSTLIHTLRSEGYLDPGCKPDLGRFQALADNIVPLLSTKIRRTIQAGNRL.

The short motif at 309 to 314 (CHRSHM) is the HXXXXD motif element.

This sequence belongs to the GPAT/DAPAT family.

The protein localises to the cell inner membrane. It carries out the reaction sn-glycerol 3-phosphate + an acyl-CoA = a 1-acyl-sn-glycero-3-phosphate + CoA. It participates in phospholipid metabolism; CDP-diacylglycerol biosynthesis; CDP-diacylglycerol from sn-glycerol 3-phosphate: step 1/3. The chain is Glycerol-3-phosphate acyltransferase from Aeromonas hydrophila subsp. hydrophila (strain ATCC 7966 / DSM 30187 / BCRC 13018 / CCUG 14551 / JCM 1027 / KCTC 2358 / NCIMB 9240 / NCTC 8049).